A 349-amino-acid polypeptide reads, in one-letter code: Nicotinate-nucleotide--dimethylbenzimidazole phosphoribosyltransferase (349 aa).

Residue glutamate 313 is the Proton acceptor of the active site.

This sequence belongs to the CobT family.

The catalysed reaction is 5,6-dimethylbenzimidazole + nicotinate beta-D-ribonucleotide = alpha-ribazole 5'-phosphate + nicotinate + H(+). It functions in the pathway nucleoside biosynthesis; alpha-ribazole biosynthesis; alpha-ribazole from 5,6-dimethylbenzimidazole: step 1/2. In terms of biological role, catalyzes the synthesis of alpha-ribazole-5'-phosphate from nicotinate mononucleotide (NAMN) and 5,6-dimethylbenzimidazole (DMB). This Mycobacterium avium (strain 104) protein is Nicotinate-nucleotide--dimethylbenzimidazole phosphoribosyltransferase.